A 513-amino-acid polypeptide reads, in one-letter code: MNSQSNLTQFLKDSESYKTIPIVETITVDTLSPIQIVEKLKQDIVYLLESKDESSSWSRYSFIGLHPFLTLHDDQNKYIARDAAGQKLMQKQELKELLDWMKEQYQIKTPDIDIPFTGGAVGYLSYDLIPTLTSVRPHRSASTIENAHICLPTMIAFDHETNHVHFIQYTQLTGHETEDEKIRAYKEKQKQLEQMIHKLHSKVDMKELILSGNMNEPPSFEHVTSTYEKAQFLKDVEKIKEYIRAGDIFQGVLSQRFDIPVSVSSFELYRVLRIVNPSPYMYFMKLKDRDLVGSSPERLIHAKNGHLEIHPIAGTRKRGTTREEDAELARELLEDEKEKAEHYMLVDLARNDVGRVAEYGSVSVPTFTKVVNFSHVMHIISIVTGKLKRDTHPVDALMSAFPAGTLTGAPKIRAMQLLNEMEPEPRETYGGCIAYIGFDGNIDSCITIRTMSVKNHTASIQAGAGIVADSVPENEWEETCNKAGALLKAIQLAEHIFSEKESVQDESPTISSC.

L-tryptophan is bound by residues S50 and 279-281 (PYM). Residue 314–315 (GT) coordinates chorismate. Mg(2+) is bound at residue E341. Residues Y429, R449, 463–465 (GAG), and G465 each bind chorismate. Mg(2+) is bound at residue E478.

Belongs to the anthranilate synthase component I family. As to quaternary structure, heterotetramer consisting of two non-identical subunits: a beta subunit (TrpG) and a large alpha subunit (TrpE). Requires Mg(2+) as cofactor.

It carries out the reaction chorismate + L-glutamine = anthranilate + pyruvate + L-glutamate + H(+). The protein operates within amino-acid biosynthesis; L-tryptophan biosynthesis; L-tryptophan from chorismate: step 1/5. With respect to regulation, feedback inhibited by tryptophan. In terms of biological role, part of a heterotetrameric complex that catalyzes the two-step biosynthesis of anthranilate, an intermediate in the biosynthesis of L-tryptophan. In the first step, the glutamine-binding beta subunit (TrpG) of anthranilate synthase (AS) provides the glutamine amidotransferase activity which generates ammonia as a substrate that, along with chorismate, is used in the second step, catalyzed by the large alpha subunit of AS (TrpE) to produce anthranilate. In the absence of TrpG, TrpE can synthesize anthranilate directly from chorismate and high concentrations of ammonia. The sequence is that of Anthranilate synthase component 1 (trpE) from Bacillus pumilus (Bacillus mesentericus).